Consider the following 617-residue polypeptide: MIKSQESLTLEDVAVEFTWEEWQLLGPAQKDLYRDVMLENYSNLVSVGYQASKPDALFKLEQGEPWTVENEIHSQICPEIKKVDNHLQMHSQKQRCLKRVEQCHKHNAFGNIIHQRKSDFPLRQNHDTFDLHGKILKSNLSLVNQNKRYEIKNSVGVNGDGKSFLHAKHEQFHNEMNFPEGGNSVNTNSQFIKHQRTQNIDKPHVCTECGKAFLKKSRLIYHQRVHTGEKPHGCSICGKAFSRKSGLTEHQRNHTGEKPYECTECDKAFRWKSQLNAHQKIHTGEKSYICSDCGKGFIKKSRLINHQRVHTGEKPHGCSLCGKAFSKRSRLTEHQRTHTGEKPYECTECDKAFRWKSQLNAHQKAHTGEKSYICRDCGKGFIQKGNLIVHQRIHTGEKPYICNECGKGFIQKGNLLIHRRTHTGEKPYVCNECGKGFSQKTCLISHQRFHTGKTPFVCTECGKSCSHKSGLINHQRIHTGEKPYTCSDCGKAFRDKSCLNRHRRTHTGERPYGCSDCGKAFSHLSCLVYHKGMLHAREKCVGSVKLENPCSESHSLSHTRDLIQDKDSVNMVTLQMPSVAAQTSLTNSAFQAESKVAIVSQPVARSSVSADSRICTE.

Positions 8–78 (LTLEDVAVEF…ENEIHSQICP (71 aa)) constitute a KRAB domain. C2H2-type zinc fingers lie at residues 204–226 (HVCT…QRVH), 232–254 (HGCS…QRNH), 260–282 (YECT…QKIH), 288–310 (YICS…QRVH), 316–338 (HGCS…QRTH), 344–366 (YECT…QKAH), 372–394 (YICR…QRIH), 400–422 (YICN…RRTH), 428–450 (YVCN…QRFH), 456–478 (FVCT…QRIH), 484–506 (YTCS…RRTH), and 512–535 (YGCS…GMLH).

Belongs to the krueppel C2H2-type zinc-finger protein family.

Its subcellular location is the nucleus. In terms of biological role, may be involved in transcriptional regulation. The polypeptide is Zinc finger protein 613 (ZNF613) (Homo sapiens (Human)).